A 274-amino-acid chain; its full sequence is Cytochrome b-c1 complex subunit Rieske, mitochondrial (274 aa).

The Mitochondrial matrix segment spans residues 79–103 (SHTDIKVPDFSDYRRSEVLDTTKSS). A helical membrane pass occupies residues 104 to 140 (RESSDARKGFSYLVTATTAVGVTYAAKSIVTQFVSSM). The Mitochondrial intermembrane portion of the chain corresponds to 141–274 (SASADVLAMS…FTSDDLVIVG (134 aa)). Residues 187 to 272 (EAAVELSQLR…YEFTSDDLVI (86 aa)) form the Rieske domain. [2Fe-2S] cluster contacts are provided by Cys217, His219, Cys236, His239, and Ser241. Cys222 and Cys238 form a disulfide bridge.

The protein belongs to the Rieske iron-sulfur protein family. In terms of assembly, component of the ubiquinol-cytochrome c oxidoreductase (cytochrome b-c1 complex, complex III, CIII), a multisubunit enzyme composed of 11 subunits. The complex is composed of 3 respiratory subunits cytochrome b, cytochrome c1 and Rieske protein UQCRFS1, 2 core protein subunits UQCRC1/QCR1 and UQCRC2/QCR2, and 6 low-molecular weight protein subunits UQCRH/QCR6, UQCRB/QCR7, UQCRQ/QCR8, UQCR10/QCR9, UQCR11/QCR10 and subunit 9, the cleavage product of Rieske protein UQCRFS1. The complex exists as an obligatory dimer and forms supercomplexes (SCs) in the inner mitochondrial membrane with NADH-ubiquinone oxidoreductase (complex I, CI) and cytochrome c oxidase (complex IV, CIV), resulting in different assemblies (supercomplex SCI(1)III(2)IV(1) and megacomplex MCI(2)III(2)IV(2)). Incorporation of the Rieske protein UQCRFS1 is the penultimate step in complex III assembly. Interacts with TTC19, which is involved in the clearance of UQCRFS1 fragments. Component of the ubiquinol-cytochrome c oxidoreductase (cytochrome b-c1 complex, complex III, CIII). Subunit 9 corresponds to the mitochondrial targeting sequence (MTS) of Rieske protein UQCRFS1. It is retained after processing and incorporated inside complex III, where it remains bound to the complex and localizes between the 2 core subunits UQCRC1/QCR1 and UQCRC2/QCR2. Requires [2Fe-2S] cluster as cofactor. In terms of processing, proteolytic processing is necessary for the correct insertion of UQCRFS1 in the complex III dimer. Several fragments are generated during UQCRFS1 insertion, most probably due to the endogenous matrix-processing peptidase (MPP) activity of the 2 core protein subunits UQCRC1/QCR1 and UQCRC2/QCR2, which are homologous to the 2 mitochondrial-processing peptidase (MPP) subunits beta-MPP and alpha-MPP respectively. The action of the protease is also necessary for the clearance of the UQCRFS1 fragments.

The protein localises to the mitochondrion inner membrane. It catalyses the reaction a quinol + 2 Fe(III)-[cytochrome c](out) = a quinone + 2 Fe(II)-[cytochrome c](out) + 2 H(+)(out). Functionally, component of the ubiquinol-cytochrome c oxidoreductase, a multisubunit transmembrane complex that is part of the mitochondrial electron transport chain which drives oxidative phosphorylation. The respiratory chain contains 3 multisubunit complexes succinate dehydrogenase (complex II, CII), ubiquinol-cytochrome c oxidoreductase (cytochrome b-c1 complex, complex III, CIII) and cytochrome c oxidase (complex IV, CIV), that cooperate to transfer electrons derived from NADH and succinate to molecular oxygen, creating an electrochemical gradient over the inner membrane that drives transmembrane transport and the ATP synthase. The cytochrome b-c1 complex catalyzes electron transfer from ubiquinol to cytochrome c, linking this redox reaction to translocation of protons across the mitochondrial inner membrane, with protons being carried across the membrane as hydrogens on the quinol. In the process called Q cycle, 2 protons are consumed from the matrix, 4 protons are released into the intermembrane space and 2 electrons are passed to cytochrome c. The Rieske protein is a catalytic core subunit containing a [2Fe-2S] iron-sulfur cluster. It cycles between 2 conformational states during catalysis to transfer electrons from the quinol bound in the Q(0) site in cytochrome b to cytochrome c1. Incorporation of UQCRFS1 is the penultimate step in complex III assembly. Its function is as follows. Component of the ubiquinol-cytochrome c oxidoreductase (cytochrome b-c1 complex, complex III, CIII). UQCRFS1 undergoes proteolytic processing once it is incorporated in the complex III dimer. One of the fragments, called subunit 9, corresponds to its mitochondrial targeting sequence (MTS). The proteolytic processing is necessary for the correct insertion of UQCRFS1 in the complex III dimer, but the persistence of UQCRFS1-derived fragments may prevent newly imported UQCRFS1 to be processed and assembled into complex III and is detrimental for the complex III structure and function. In Aotus azarae (Azara's night monkey), this protein is Cytochrome b-c1 complex subunit Rieske, mitochondrial (UQCRFS1).